A 275-amino-acid chain; its full sequence is NH(3)-dependent NAD(+) synthetase (275 aa).

46-53 is an ATP binding site; sequence GISGGQDS. Residue aspartate 52 coordinates Mg(2+). Arginine 140 is a binding site for deamido-NAD(+). Threonine 160 contributes to the ATP binding site. Glutamate 165 serves as a coordination point for Mg(2+). Deamido-NAD(+) contacts are provided by lysine 173 and aspartate 180. Lysine 189 and threonine 211 together coordinate ATP. A deamido-NAD(+)-binding site is contributed by 260–261; sequence HK.

The protein belongs to the NAD synthetase family. As to quaternary structure, homodimer.

The catalysed reaction is deamido-NAD(+) + NH4(+) + ATP = AMP + diphosphate + NAD(+) + H(+). It functions in the pathway cofactor biosynthesis; NAD(+) biosynthesis; NAD(+) from deamido-NAD(+) (ammonia route): step 1/1. Functionally, catalyzes the ATP-dependent amidation of deamido-NAD to form NAD. Uses ammonia as a nitrogen source. The chain is NH(3)-dependent NAD(+) synthetase from Salmonella paratyphi A (strain ATCC 9150 / SARB42).